The following is a 64-amino-acid chain: uncharacterized protein (64 aa).

This is an uncharacterized protein from Saccharomyces cerevisiae (strain ATCC 204508 / S288c) (Baker's yeast).